The chain runs to 356 residues: Protein RecA (356 aa).

78-85 contributes to the ATP binding site; it reads GPESSGKT.

The protein belongs to the RecA family.

The protein resides in the cytoplasm. Can catalyze the hydrolysis of ATP in the presence of single-stranded DNA, the ATP-dependent uptake of single-stranded DNA by duplex DNA, and the ATP-dependent hybridization of homologous single-stranded DNAs. It interacts with LexA causing its activation and leading to its autocatalytic cleavage. This Paracoccus denitrificans protein is Protein RecA.